We begin with the raw amino-acid sequence, 1375 residues long: DNA-directed RNA polymerase subunit beta (1375 aa).

Belongs to the RNA polymerase beta chain family. In terms of assembly, the RNAP catalytic core consists of 2 alpha, 1 beta, 1 beta' and 1 omega subunit. When a sigma factor is associated with the core the holoenzyme is formed, which can initiate transcription.

It catalyses the reaction RNA(n) + a ribonucleoside 5'-triphosphate = RNA(n+1) + diphosphate. In terms of biological role, DNA-dependent RNA polymerase catalyzes the transcription of DNA into RNA using the four ribonucleoside triphosphates as substrates. The sequence is that of DNA-directed RNA polymerase subunit beta from Methylibium petroleiphilum (strain ATCC BAA-1232 / LMG 22953 / PM1).